Reading from the N-terminus, the 453-residue chain is Calcium-binding tyrosine phosphorylation-regulated protein (453 aa).

Residues 12–49 (YGLKTLLEGVSRAILKTNPTNITQFAAVYFKELIVFRE) form the RIIa domain. Disordered regions lie at residues 86–165 (PIKP…PVSA), 246–278 (PVSE…QVTS), and 406–453 (IINP…PEQV). Over residues 143-154 (DKPTTPKTDYTP) the composition is skewed to low complexity.

Interacts with FSCB. Phosphorylated on tyrosine residues during in vitro capacitation. Dephosphorylation affects its ability to bind calcium. As to expression, expressed in spermatozoa.

The protein resides in the cytoplasm. It localises to the cytoskeleton. The protein localises to the cell projection. It is found in the cilium. Its subcellular location is the flagellum. In terms of biological role, may function as a regulator of both motility- and head-associated functions such as capacitation and the acrosome reaction. May bind calcium in vitro. This is Calcium-binding tyrosine phosphorylation-regulated protein (Cabyr) from Mus musculus (Mouse).